A 124-amino-acid polypeptide reads, in one-letter code: Small ribosomal subunit protein uS12 (124 aa).

Asp89 is modified (3-methylthioaspartic acid). The segment at 103–124 is disordered; that stretch reads DTAGVKDRRQGRSKYGAKRPKD. Over residues 113-124 the composition is skewed to basic residues; that stretch reads GRSKYGAKRPKD.

The protein belongs to the universal ribosomal protein uS12 family. In terms of assembly, part of the 30S ribosomal subunit. Contacts proteins S8 and S17. May interact with IF1 in the 30S initiation complex.

Functionally, with S4 and S5 plays an important role in translational accuracy. In terms of biological role, interacts with and stabilizes bases of the 16S rRNA that are involved in tRNA selection in the A site and with the mRNA backbone. Located at the interface of the 30S and 50S subunits, it traverses the body of the 30S subunit contacting proteins on the other side and probably holding the rRNA structure together. The combined cluster of proteins S8, S12 and S17 appears to hold together the shoulder and platform of the 30S subunit. The chain is Small ribosomal subunit protein uS12 from Acaryochloris marina (strain MBIC 11017).